The primary structure comprises 309 residues: Foldase protein PrsA (309 aa).

The N-terminal stretch at 1 to 22 is a signal peptide; sequence MKTRSKLAAGFLTLMSVATLAA. The N-palmitoyl cysteine moiety is linked to residue C23. C23 carries the S-diacylglycerol cysteine lipid modification. The PpiC domain maps to 146–241; it reads TPETSVQVIK…TSYYIIKVTD (96 aa).

It belongs to the PrsA family.

It is found in the cell membrane. It catalyses the reaction [protein]-peptidylproline (omega=180) = [protein]-peptidylproline (omega=0). Its function is as follows. Plays a major role in protein secretion by helping the post-translocational extracellular folding of several secreted proteins. The chain is Foldase protein PrsA from Streptococcus agalactiae serotype V (strain ATCC BAA-611 / 2603 V/R).